A 252-amino-acid chain; its full sequence is Adenosylcobinamide-GDP ribazoletransferase (252 aa).

6 consecutive transmembrane segments (helical) span residues 29 to 49, 50 to 70, 104 to 124, 129 to 149, 166 to 186, and 194 to 214; these read LYWF…LGYV, GSLS…GIVL, VGSF…VAVV, FGLF…QVLL, FVAG…LALL, and FPTM…VGMV.

The protein belongs to the CobS family. The cofactor is Mg(2+).

It localises to the cell inner membrane. The enzyme catalyses alpha-ribazole + adenosylcob(III)inamide-GDP = adenosylcob(III)alamin + GMP + H(+). It carries out the reaction alpha-ribazole 5'-phosphate + adenosylcob(III)inamide-GDP = adenosylcob(III)alamin 5'-phosphate + GMP + H(+). The protein operates within cofactor biosynthesis; adenosylcobalamin biosynthesis; adenosylcobalamin from cob(II)yrinate a,c-diamide: step 7/7. Joins adenosylcobinamide-GDP and alpha-ribazole to generate adenosylcobalamin (Ado-cobalamin). Also synthesizes adenosylcobalamin 5'-phosphate from adenosylcobinamide-GDP and alpha-ribazole 5'-phosphate. In Chlorobium chlorochromatii (strain CaD3), this protein is Adenosylcobinamide-GDP ribazoletransferase.